Consider the following 253-residue polypeptide: 3-deoxy-manno-octulosonate cytidylyltransferase (253 aa).

The protein belongs to the KdsB family.

It is found in the cytoplasm. The enzyme catalyses 3-deoxy-alpha-D-manno-oct-2-ulosonate + CTP = CMP-3-deoxy-beta-D-manno-octulosonate + diphosphate. Its pathway is nucleotide-sugar biosynthesis; CMP-3-deoxy-D-manno-octulosonate biosynthesis; CMP-3-deoxy-D-manno-octulosonate from 3-deoxy-D-manno-octulosonate and CTP: step 1/1. It participates in bacterial outer membrane biogenesis; lipopolysaccharide biosynthesis. Activates KDO (a required 8-carbon sugar) for incorporation into bacterial lipopolysaccharide in Gram-negative bacteria. The protein is 3-deoxy-manno-octulosonate cytidylyltransferase of Idiomarina loihiensis (strain ATCC BAA-735 / DSM 15497 / L2-TR).